A 206-amino-acid polypeptide reads, in one-letter code: Small ribosomal subunit protein uS4 (206 aa).

Residues 15–46 form a disordered region; the sequence is MGENIWGRPKSPVNKREYGPGQHGQRRKNKLS. The region spanning 94–154 is the S4 RNA-binding domain; sequence RRLDAIVYRA…EKSRQLALVL (61 aa).

It belongs to the universal ribosomal protein uS4 family. In terms of assembly, part of the 30S ribosomal subunit. Contacts protein S5. The interaction surface between S4 and S5 is involved in control of translational fidelity.

In terms of biological role, one of the primary rRNA binding proteins, it binds directly to 16S rRNA where it nucleates assembly of the body of the 30S subunit. With S5 and S12 plays an important role in translational accuracy. This Cereibacter sphaeroides (strain ATCC 17029 / ATH 2.4.9) (Rhodobacter sphaeroides) protein is Small ribosomal subunit protein uS4.